Consider the following 124-residue polypeptide: Ragulator complex protein LAMTOR3 (124 aa).

The required for interaction with LAMTOR2 stretch occupies residues 57-70 (TDQGSKLGLSKNKS).

This sequence belongs to the LAMTOR3 family. Part of the Ragulator complex composed of LAMTOR1, LAMTOR2, LAMTOR3, LAMTOR4 and LAMTOR5. LAMTOR4 and LAMTOR5 form a heterodimer that interacts, through LAMTOR1, with a LAMTOR2, LAMTOR3 heterodimer. The Ragulator complex interacts with both the mTORC1 complex and heterodimers constituted of the Rag GTPases RagA/RRAGA, RagB/RRAGB, RagC/RRAGC and RagD/RRAGD; regulated by amino acid availability. The Ragulator complex interacts with SLC38A9; the probable amino acid sensor. Interacts with LAMTOR1 and LAMTOR2; the interaction is direct. Component of the lysosomal folliculin complex (LFC), composed of FLCN, FNIP1 (or FNIP2), RagA/RRAGA or RagB/RRAGB GDP-bound, RagC/RRAGC or RagD/RRAGD GTP-bound, and Ragulator. Interacts with MAP2K1/MEK1 and MAPK2. Interacts with MORG1.

The protein resides in the late endosome membrane. As part of the Ragulator complex it is involved in amino acid sensing and activation of mTORC1, a signaling complex promoting cell growth in response to growth factors, energy levels, and amino acids. Activated by amino acids through a mechanism involving the lysosomal V-ATPase, the Ragulator plays a dual role for the small GTPases Rag (RagA/RRAGA, RagB/RRAGB, RagC/RRAGC and/or RagD/RRAGD): it (1) acts as a guanine nucleotide exchange factor (GEF), activating the small GTPases Rag and (2) mediates recruitment of Rag GTPases to the lysosome membrane. Activated Ragulator and Rag GTPases function as a scaffold recruiting mTORC1 to lysosomes where it is in turn activated. Adapter protein that enhances the efficiency of the MAP kinase cascade facilitating the activation of MAPK2. This chain is Ragulator complex protein LAMTOR3 (Lamtor3), found in Mus musculus (Mouse).